The primary structure comprises 2193 residues: Highly reducing polyketide synthase VdtX (2193 aa).

The 417-residue stretch at 1–417 (MAICGIAVRL…GVNAHVIIES (417 aa)) folds into the Ketosynthase family 3 (KS3) domain. Residues cysteine 170, histidine 306, and histidine 340 each act as for beta-ketoacyl synthase activity in the active site. The tract at residues 513–809 (VFAGQGAQWP…HPYVPCLIRF (297 aa)) is malonyl-CoA:ACP transacylase (MAT) domain. Positions 877-1001 (HELLGTRVVD…GEVAQENLSR (125 aa)) are N-terminal hotdog fold. Positions 877–1128 (HELLGTRVVD…DIVLRPLGAN (252 aa)) are dehydratase (DH) domain. Positions 877-1202 (HELLGTRVVD…LQRQPKPSSE (326 aa)) constitute a PKS/mFAS DH domain. Histidine 909 serves as the catalytic Proton acceptor; for dehydratase activity. The segment at 1032–1202 (SVTSNTVSGR…LQRQPKPSSE (171 aa)) is C-terminal hotdog fold. Catalysis depends on aspartate 1093, which acts as the Proton donor; for dehydratase activity. A methyltransferase (CMet) domain region spans residues 1256 to 1390 (NYLNEPQQRI…DRWDSILKAA (135 aa)). The tract at residues 1575-1783 (GQQVQLLGDD…SGQHIGQLRL (209 aa)) is enoyl reductase (ER) domain. Residues 1807–1981 (ASYLLVGGLG…ASVIDIGEVQ (175 aa)) are ketoreductase (KR) domain. The region spanning 2102-2183 (PSATQFVSLE…AMGEHVIREL (82 aa)) is the Carrier domain. Serine 2143 is subject to O-(pantetheine 4'-phosphoryl)serine.

In terms of biological role, highly reducing polyketide synthase; part of the gene cluster that mediates the biosynthesis of viriditoxin, one of the 'classical' secondary metabolites produced by fungi and that has antibacterial activity. The first step is performed by the polyketide synthase VdtA which condenses one acetyl-CoA and 6 malonyl-CoA units to form the heptaketide monomer backbone of viriditoxin. The product of VdtA is then O-methylated on C7 by the O-methyltransferase VdtC. The O-methyl group is important for the stereoselective coupling of the monomers at the final step of viriditoxin biosynthesis. The short-chain dehydrogenase/reductase VdtF is involved in the reduction of the C3-C4 double bond. The FAD-binding monooxygenase VdtE then converts the ketone group into a methyl-ester group to yield semi-viriditoxin. Finally, the laccase VdtB is involved in dimerization of 2 semi-viriditoxin molecules to yield the final viriditoxin. The non-catalytic carboxylesterase-like protein VdtD affects the stereochemistical outcome of the coupling. The highly reducing polyketide synthase VdtX is not involved in viriditoxin synthesis, but might possibly play a role in the production of additional metabolites not identified yet. The chain is Highly reducing polyketide synthase VdtX from Byssochlamys spectabilis (Paecilomyces variotii).